A 480-amino-acid polypeptide reads, in one-letter code: Probable G-protein coupled receptor Mth-like 6 (480 aa).

The N-terminal stretch at methionine 1–alanine 20 is a signal peptide. The Extracellular segment spans residues valine 21–methionine 202. 4 disulfides stabilise this stretch: cysteine 25/cysteine 78, cysteine 80/cysteine 85, cysteine 89/cysteine 179, and cysteine 90/cysteine 101. An N-linked (GlcNAc...) asparagine glycan is attached at asparagine 40. Residues asparagine 160 and asparagine 170 are each glycosylated (N-linked (GlcNAc...) asparagine). Residues proline 203–tyrosine 225 traverse the membrane as a helical segment. Residues isoleucine 226–asparagine 231 lie on the Cytoplasmic side of the membrane. Residues leucine 232–glycine 254 form a helical membrane-spanning segment. The Extracellular portion of the chain corresponds to aspartate 255 to cysteine 263. The helical transmembrane segment at serine 264 to valine 283 threads the bilayer. Over methionine 284–histidine 303 the chain is Cytoplasmic. The helical transmembrane segment at phenylalanine 304–aspartate 326 threads the bilayer. At tryptophan 327–alanine 356 the chain is on the extracellular side. The chain crosses the membrane as a helical span at residues methionine 357–valine 379. At asparagine 380 to phenylalanine 405 the chain is on the cytoplasmic side. A helical transmembrane segment spans residues leucine 406 to valine 428. The Extracellular portion of the chain corresponds to lysine 429–valine 437. Residues leucine 438 to isoleucine 457 traverse the membrane as a helical segment. Residues leucine 458–serine 480 lie on the Cytoplasmic side of the membrane.

This sequence belongs to the G-protein coupled receptor 2 family. Mth subfamily.

The protein resides in the cell membrane. This chain is Probable G-protein coupled receptor Mth-like 6 (mthl6), found in Drosophila melanogaster (Fruit fly).